The following is a 70-amino-acid chain: Small ribosomal subunit protein bS21B (70 aa).

It belongs to the bacterial ribosomal protein bS21 family.

The sequence is that of Small ribosomal subunit protein bS21B from Cupriavidus metallidurans (strain ATCC 43123 / DSM 2839 / NBRC 102507 / CH34) (Ralstonia metallidurans).